A 22-amino-acid chain; its full sequence is Peptide PGLa-R1 (22 aa).

Residue Leu-22 is modified to Leucine amide.

As to expression, expressed by the skin glands.

It is found in the secreted. Functionally, antimicrobial peptide. This chain is Peptide PGLa-R1, found in Xenopus ruwenzoriensis (Uganda clawed frog).